The primary structure comprises 518 residues: Motile sperm domain-containing protein 2 (518 aa).

Residues 1–496 are Cytoplasmic-facing; that stretch reads MAENHAQNKA…QVQRCIWFQQ (496 aa). Residues 82-239 enclose the CRAL-TRIO domain; it reads ESSIPRWLLE…HMGGTDPFKY (158 aa). The disordered stretch occupies residues 252 to 308; it reads PLCENGPITSEDETSSKEDIESDGKETLETISNEEQTPLLKKINPTESTSKAEENEK. Residues 265–279 are compositionally biased toward basic and acidic residues; sequence TSSKEDIESDGKETL. The region spanning 327–445 is the MSP domain; sequence LLHISPAEEL…MEHRLRCHTV (119 aa). Residues 365 to 366 form a required for FFAT motif binding and phosphorylated FFAT motif binding region; the sequence is RT. The helical; Anchor for type IV membrane protein transmembrane segment at 497–518 threads the bilayer; it reads LLLSLTMLLLAFVTSFFYLLYS.

In terms of assembly, homooligomer. Interacts (via MSP domain) with STARD3NL (via FFAT motif), RMDN3 (via FFAT motif), OSBPL1A (via FFAT motif) and CERT1 (via FFAT motif). Interacts (via MSP domain) with STARD3 (via phosphorylated FFAT motif); this interaction depends on the critical phosphorylation of STARD3 on 'Ser-209'. Interacts with RB1CC1 (via phosphorylated FFAT motif), MIGA2 (via phosphorylated FFAT motif) and OSBPL1A (via FFAT motif). As to expression, highly expressed in CD14(+) monocytes, and at lower levels in neutrophils. Does not show significant expression in B-cells or T-cells.

It localises to the endoplasmic reticulum membrane. In terms of biological role, endoplasmic reticulum-anchored protein that mediates the formation of contact sites between the endoplasmic (ER) and endosomes, mitochondria or Golgi through interaction with conventional- and phosphorylated-FFAT-containing organelle-bound proteins. In addition, forms endoplasmic reticulum (ER)-lipid droplets (LDs) contacts through a direct protein-membrane interaction and participates in LDs homeostasis. The attachment mechanism involves an amphipathic helix that has an affinity for lipid packing defects present at the surface of LDs. Promotes migration of primary monocytes and neutrophils, in response to various chemokines. This chain is Motile sperm domain-containing protein 2, found in Homo sapiens (Human).